A 517-amino-acid polypeptide reads, in one-letter code: Cytochrome P450 monooxygenase stcB (517 aa).

C461 is a binding site for heme.

This sequence belongs to the cytochrome P450 family. Heme serves as cofactor.

It participates in mycotoxin biosynthesis; sterigmatocystin biosynthesis. Functionally, cytochrome P450 monooxygenase; part of the gene cluster that mediates the biosynthesis of sterigmatocystin (ST), a polyketide-derived furanocoumarin which is part of the most toxic and carcinogenic compounds among the known mycotoxins. The first step in the biosynthesis of sterigmatocystin is the production of hexanoate by the fatty acid synthase (FAS) units stcJ and stcK. The polyketide backbone is assembled by the non-reducing polyketide synthase stcA by condensation of the starter hexanoyl-CoA and 7 malonyl-CoA extender units followed by cyclization and release of norsolorinic acid. Norsolorinic acid is the first stable intermediate in the biosynthesis of sterigmatocystin and is converted into averantin (AVN) by the ketoreductase stcE which reduces the hexanoate ketone to an alcohol. Averantin is then oxidized into 5'-hydroxyaverantin (HAVN) by the cytochrome P450 monooxygenase stcF. 5'-hydroxyaverantin is further converted to 5'-oxyaverantin (OAVN) by the 5'-hydroxyaverantin dehydrogenase stcG. The next step is the conversion of OAVN into averufin (AVF) which is catalyzed by a yet to be identified enzyme. The cytochrome P450 monooxygenase stcB and the flavin-binding monooxygenase stcW are both required for the conversion of averufin to 1-hydroxyversicolorone. The esterase stcI probably catalyzes the formation of versiconal hemiacetal acetate from 1-hydroxyversicolorone. The oxydoreductase stcN then probably catalyzes the biosynthetic step from versiconal to versicolorin B (VERB). The next step is performed by the versicolorin B desaturase stcL to produce versicolorin A (VERA). The ketoreductase stcU and the cytochrome P450 monooxygenase stcS are involved in the conversion of versicolorin A to demethylsterigmatocystin. The Baeyer-Villiger oxidas stcQ and the reductase stcR might be involved in the biosynthetic step from versicolorin A to demethylsterigmatocystin. The final step in the biosynthesis of sterigmatocystin is the methylation of demethylsterigmatocystin catalyzed by the methyltransferase stcP. In Emericella nidulans (strain FGSC A4 / ATCC 38163 / CBS 112.46 / NRRL 194 / M139) (Aspergillus nidulans), this protein is Cytochrome P450 monooxygenase stcB.